Reading from the N-terminus, the 133-residue chain is Profilin-2 (133 aa).

Belongs to the profilin family. Occurs in many kinds of cells as a complex with monomeric actin in a 1:1 ratio.

It is found in the cytoplasm. The protein localises to the cytoskeleton. Its function is as follows. Binds to actin and affects the structure of the cytoskeleton. At high concentrations, profilin prevents the polymerization of actin, whereas it enhances it at low concentrations. By binding to PIP2, it inhibits the formation of IP3 and DG. This chain is Profilin-2, found in Artemisia vulgaris (Mugwort).